The chain runs to 524 residues: Probable myosin-binding protein 5 (524 aa).

A helical transmembrane segment spans residues 20–40; that stretch reads FLIYALLEWILIIILFIDGFL. A GTD-binding domain is found at 299 to 397; it reads SILQHLNRQV…ELEAGIEVYR (99 aa). Residues 462–490 are a coiled coil; it reads SRKDMLVKEISEITERLNAIESKGELLQQ.

Its subcellular location is the membrane. Functionally, probable membrane-anchored myosin receptors. The protein is Probable myosin-binding protein 5 of Arabidopsis thaliana (Mouse-ear cress).